The chain runs to 87 residues: Putative protein KleG (87 aa).

Disordered stretches follow at residues 1–23 (MRHS…WPSS) and 61–87 (IPTT…IFSR). Over residues 68-78 (RGRRPQRHRPS) the composition is skewed to basic residues.

This is Putative protein KleG (kleG) from Escherichia coli.